Consider the following 414-residue polypeptide: MLITKIFKDYRLFEIFILGIVSGMPLVIIFSTLSVWLKESGIDIAVITTFAVARLSYSLKVFWSPLVDNFKIPFLSRWGHRKSWLILCSSLMVLVLIAMSKENPEVSLTSLYFLTIALGFLSSTFDIAVDALRIDKFDQETQTIASATAVFGYRIGMLITGAGALYLAEITGNNWQLTFVIIAIIFAVATIFIITVNEKELVREKVNITSIISWIYAVINPFKDFFKREFAVTILLAVIFFKLGDAMLGAVASPFYIELGYTKGEIAIIAKLYGLIATLVGGFAGGIVMYKVGNFKGLIITGIAQSLTHFAFIWLNHQPPSFEALLIAITIENFAAAMGATALVGYIGNLCNKKYSATQYALLSSSSSLCNNTVTIYAGKLVNMMGWDGFFIFTIILALPALFILMYLNKKVNV.

The next 12 helical transmembrane spans lie at 15–35, 44–63, 84–104, 109–129, 150–170, 177–197, 230–250, 268–288, 295–315, 324–344, 360–379, and 389–409; these read IFIL…TLSV, IAVI…KVFW, WLIL…KENP, TSLY…DIAV, VFGY…LAEI, LTFV…ITVN, FAVT…MLGA, IIAK…GGIV, FKGL…FIWL, ALLI…TALV, YALL…IYAG, and GFFI…MYLN.

Belongs to the major facilitator superfamily.

It is found in the cell inner membrane. The protein is Putative transporter AmpG 4 (ampG4) of Rickettsia felis (strain ATCC VR-1525 / URRWXCal2) (Rickettsia azadi).